We begin with the raw amino-acid sequence, 232 residues long: Charged multivesicular body protein 4c (232 aa).

Disordered stretches follow at residues 1–23 and 177–232; these read MSKL…PSAQ and NKKM…AWAT. Residues 1–153 form an intramolecular interaction with C-terminus region; the sequence is MSKLGKFFKG…EISEAFSQRV (153 aa). Coiled coils occupy residues 21–45 and 125–185; these read SAQE…YLEN and LNKI…SLEL. The segment at 154–232 is intramolecular interaction with N-terminus; sequence QFADGFDEAE…DFKQLAAWAT (79 aa). Residue Ser-210 is modified to Phosphoserine; by AURKB.

The protein belongs to the SNF7 family. In terms of assembly, probable core component of the endosomal sorting required for transport complex III (ESCRT-III). ESCRT-III components are thought to multimerize to form a flat lattice on the perimeter membrane of the endosome. Several assembly forms of ESCRT-III may exist that interact and act sequentially. Self-associates. Interacts with CHMP2A. Interacts with CHMP4A. Interacts with CHMP4B. Interacts with CHMP6. Interacts with VPS4A. Interacts with PDCD6IP; the interaction is direct. Post-translationally, phosphorylated at Ser-210 by AURKB during cytokinesis: together with ZFYVE19/ANCHR, phosphorylated CHMP4C retains abscission-competent VPS4 (VPS4A and/or VPS4B) at the midbody ring until abscission checkpoint signaling is terminated at late cytokinesis.

It is found in the cytoplasm. The protein localises to the cytosol. The protein resides in the late endosome membrane. Its subcellular location is the midbody. It localises to the midbody ring. Probable core component of the endosomal sorting required for transport complex III (ESCRT-III) which is involved in multivesicular bodies (MVBs) formation and sorting of endosomal cargo proteins into MVBs. MVBs contain intraluminal vesicles (ILVs) that are generated by invagination and scission from the limiting membrane of the endosome and mostly are delivered to lysosomes enabling degradation of membrane proteins, such as stimulated growth factor receptors, lysosomal enzymes and lipids. The MVB pathway appears to require the sequential function of ESCRT-O, -I,-II and -III complexes. ESCRT-III proteins mostly dissociate from the invaginating membrane before the ILV is released. The ESCRT machinery also functions in topologically equivalent membrane fission events, such as the terminal stages of cytokinesis. Key component of the cytokinesis checkpoint, a process required to delay abscission to prevent both premature resolution of intercellular chromosome bridges and accumulation of DNA damage: upon phosphorylation by AURKB, together with ZFYVE19/ANCHR, retains abscission-competent VPS4 (VPS4A and/or VPS4B) at the midbody ring until abscission checkpoint signaling is terminated at late cytokinesis. Deactivation of AURKB results in dephosphorylation of CHMP4C followed by its dissociation from ANCHR and VPS4 and subsequent abscission. ESCRT-III proteins are believed to mediate the necessary vesicle extrusion and/or membrane fission activities, possibly in conjunction with the AAA ATPase VPS4. CHMP4A/B/C are required for the exosomal release of SDCBP, CD63 and syndecan. The chain is Charged multivesicular body protein 4c (Chmp4c) from Mus musculus (Mouse).